A 562-amino-acid chain; its full sequence is Probable tRNA (uracil-O(2)-)-methyltransferase (562 aa).

Residues 520–546 (VSRRQQTNPKKQEATNRPKQPCWMSLN) form a disordered region. The C3H1-type zinc finger occupies 535 to 562 (NRPKQPCWMSLNHPDGCPLGPESCRYLH).

This sequence belongs to the TRM44 family.

Its subcellular location is the cytoplasm. It catalyses the reaction uridine(44) in tRNA(Ser) + S-adenosyl-L-methionine = 2'-O-methyluridine(44) in tRNA(Ser) + S-adenosyl-L-homocysteine + H(+). Its function is as follows. Probable adenosyl-L-methionine (AdoMet)-dependent tRNA (uracil-O(2)-)-methyltransferase. This is Probable tRNA (uracil-O(2)-)-methyltransferase from Caenorhabditis briggsae.